The sequence spans 681 residues: Proton channel OTOP3 (681 aa).

The segment covering Met-1–Gly-25 has biased composition (basic and acidic residues). Positions Met-1–Lys-26 are disordered. Topologically, residues Met-1–Arg-112 are cytoplasmic. Residues Leu-113 to Val-133 traverse the membrane as a helical segment. At Ala-134–Arg-143 the chain is on the extracellular side. A helical membrane pass occupies residues Asp-144–Phe-166. Topologically, residues Ile-167–Ala-182 are cytoplasmic. The helical transmembrane segment at Met-183–Ile-204 threads the bilayer. The Extracellular segment spans residues Gly-205 to Leu-216. Residues Met-217–Cys-240 traverse the membrane as a helical segment. The Cytoplasmic portion of the chain corresponds to Lys-241 to His-248. A helical membrane pass occupies residues Ser-249–Ile-271. Residues Asp-272 to Pro-317 lie on the Extracellular side of the membrane. The chain crosses the membrane as a helical span at residues Phe-318–Trp-334. The Cytoplasmic segment spans residues Lys-335–Ile-358. Residues Tyr-359–Tyr-378 form a helical membrane-spanning segment. Topologically, residues Gln-379–Tyr-392 are extracellular. A helical transmembrane segment spans residues His-393 to Ile-415. Topologically, residues Ala-416 to Lys-507 are cytoplasmic. The chain crosses the membrane as a helical span at residues Leu-508–Ile-529. At Ala-530 to Leu-540 the chain is on the extracellular side. The helical transmembrane segment at Ser-541–Ile-563 threads the bilayer. At Glu-564 to Glu-614 the chain is on the cytoplasmic side. The chain crosses the membrane as a helical span at residues Met-615–Phe-632. Residues Gly-633–Ile-651 are Extracellular-facing. Residues Trp-652–Leu-674 form a helical membrane-spanning segment. At Leu-675–Ala-681 the chain is on the cytoplasmic side.

It belongs to the otopetrin family. In terms of assembly, homodimer.

The protein resides in the cell membrane. It carries out the reaction H(+)(in) = H(+)(out). Its activity is regulated as follows. pH regulates the proton channel activity from both sides of the plasma membrane. Low pH activates the channel from the extracellular side but inactivates the channel on the intracellular side. Zn(2+) and Ca(2+) can partially block the channel. Functionally, proton-selective channel gated by extracellular protons. The sequence is that of Proton channel OTOP3 (otop3) from Xenopus tropicalis (Western clawed frog).